We begin with the raw amino-acid sequence, 683 residues long: Pre-mRNA-splicing factor CLF1 (683 aa).

13 HAT repeats span residues 40-72, 74-106, 108-140, 142-173, 175-206, 291-323, 336-367, 374-407, 409-440, 442-474, 476-513, 515-547, and 582-620; these read DWQR…FEYE, RDMR…CELR, RDVN…MEES, GQVE…FETR, GQVE…FERK, SILF…LLEE, ATVK…FLET, LTRS…FEIR, EKLD…LEIK, KEFD…LEEN, GDED…FETD, SEFE…YESS, and ENKE…YESI.

This sequence belongs to the crooked-neck family. As to quaternary structure, associated with the spliceosome.

Its subcellular location is the nucleus. Its function is as follows. Involved in pre-mRNA splicing and cell cycle progression. Required for the spliceosome assembly and initiation of the DNA replication. The polypeptide is Pre-mRNA-splicing factor CLF1 (CLF1) (Eremothecium gossypii (strain ATCC 10895 / CBS 109.51 / FGSC 9923 / NRRL Y-1056) (Yeast)).